The primary structure comprises 1164 residues: MKKNTDSEMDQRLGYKFLVPDPKAGVFYRPLHFQYVSYSNFILHRLHEILTVKRPLLSFKNNTERIMIEISNVKVTPPDYSPIIASIKGKSYDALATFTVNIFKEVMTKEGISITKISSYEGKDSHLIKIPLLIGYGNKNPLDTAKYLVPNVIGGVFINKQSVEKVGINLVEKITTWPKFRVVKPNSFTFSFSSVSPPNVLPTRYRHYKISLDISQLEASNISSTKTFITVNIVLLSQYLSRVSLEFIRRSLSYDMPPEVVYLVNAIIDSAKRLTESITDFNIDTYINDLVEAEHIKQKSQLTINEFKYEMLYNFLPHMNYTPDQLKGFYMISLLRKFLYCIYHTSRYPDRDSMVCHRILTYGKYFETLAHDELENYIGNIRNDIMNNHKNRGTYAVNIHVLTTPGLNHAFSSLLSGKFKKSDGSYRTHPHYSWMQNISIPRSVGFYPDQVKISKMFSVRKYHPSQYLYFCSSDVPERGPQVGLVSQLSVLSSITNILTSEYLDLEKKICEYIRSYYKDDISYFETGFPITIENALVASLNPNMICDFVTDFRRRKRMGFFGNLEVGITLVRDHMNEIRINIGAGRLVRPFLVVDNGELMMDVCPELESRLDDMTFSDIQKEFPHVIEMVDIEQFTFSNVCESVQKFRMMSKDERKQYDLCDFPAEFRDGYVASSLVGINHNSGPRAILGCAQAKQAISCLSSDIRNKIDNGIHLMYPERPIVISKALETSKIAANCFGQHVTIALMSYKGINQEDGIIIKKQFIQRGGLDIVTAKKHQVEIPLENFNNKERDRSNAYSKLESNGLVRLNAFLESGDAMARNISSRTLEDDFARDNQISFDVSEKYTDMYKSRVERVQVELTDKVKVRVLTMKERRPILGDKFTTRTSQKGTVAYIADETELPYDENGITPDVIINSTSIFSRKTISMLIEVILTAAYSVKPYNNKGENRPVCFPSSNETSIDTYMQFAKQCYEHSNPKLSEEELSDKIFCEKILYDPETDKPYGSKVFFGPIYYLRLRHLTQDKATVRCRGKKTKLIRQANEGRKRGGGIKFGEMERDCLIAHGAANTITEVLKDSEEDYQDVYICENCGDIAAQIKSINTCLRCSKLNLSPLLTKIDTTHVSKVFLTQMNARGVKVKLDFERRPPSFYKPLDKVDLKPSFLK.

Belongs to the RNA polymerase beta chain family. As to quaternary structure, the DNA-dependent RNA polymerase used for intermediate and late genes expression consists of eight subunits (147) kDa, (133) kDa, (35) kDa, (30) kDa, (22) kDa, (19) kDa, (18) kDa and (7) kDa totalling more than 500 kDa in mass. The same holoenzyme, with the addition of the transcription-specificity factor RAP94, is used for early gene expression.

It is found in the virion. The enzyme catalyses RNA(n) + a ribonucleoside 5'-triphosphate = RNA(n+1) + diphosphate. Functionally, part of the DNA-dependent RNA polymerase which catalyzes the transcription of viral DNA into RNA using the four ribonucleoside triphosphates as substrates. Responsible for the transcription of early, intermediate and late genes. DNA-dependent RNA polymerase associates with the early transcription factor (ETF), itself composed of D6 and A7, thereby allowing the early genes transcription. Late transcription, and probably also intermediate transcription, require newly synthesized RNA polymerase. This chain is DNA-directed RNA polymerase 132 kDa polypeptide (RPO132), found in Camelus.